The primary structure comprises 425 residues: Serine--tRNA ligase (425 aa).

L-serine is bound at residue 226–228 (TSE). ATP-binding positions include 257 to 259 (RRE) and Val273. Glu280 is a binding site for L-serine. 344–347 (ELTS) lines the ATP pocket. Thr382 contacts L-serine.

This sequence belongs to the class-II aminoacyl-tRNA synthetase family. Type-1 seryl-tRNA synthetase subfamily. As to quaternary structure, homodimer. The tRNA molecule binds across the dimer.

It localises to the cytoplasm. The enzyme catalyses tRNA(Ser) + L-serine + ATP = L-seryl-tRNA(Ser) + AMP + diphosphate + H(+). The catalysed reaction is tRNA(Sec) + L-serine + ATP = L-seryl-tRNA(Sec) + AMP + diphosphate + H(+). It participates in aminoacyl-tRNA biosynthesis; selenocysteinyl-tRNA(Sec) biosynthesis; L-seryl-tRNA(Sec) from L-serine and tRNA(Sec): step 1/1. Its function is as follows. Catalyzes the attachment of serine to tRNA(Ser). Is also able to aminoacylate tRNA(Sec) with serine, to form the misacylated tRNA L-seryl-tRNA(Sec), which will be further converted into selenocysteinyl-tRNA(Sec). The protein is Serine--tRNA ligase of Mycobacterium avium (strain 104).